Consider the following 433-residue polypeptide: MSKKPHSIKVPTQYRATAKILKAALEQQKCIKTLIFAEKHARTRSLHTVLKKFSENRVALEKAIEETGLLRDNPSFDPSLAKILVTELLFGRKELNGESKPVQTVRSYKDRLLNSIRDFGVQRKEPNPRYVRINTNLYSLAEALDYLHKSDWRRKELPADASYADFLTAIKSLAENEFMTDLHVEGVLIFPAKWSNYWVRHPLVHSKRFILQNKATCLAAELLAPPSGATVLDMCAAPGMKTVHICNVMQNKGCIYSVEQDHVRYNTLCEITKDAGCDIVKPILGDALNLTPERFPDVEYILVDPSCSGSGMQNRMTVCDEPKEDKRLQKLQGLQIKILSHAMGAFPNVKRIAYCTCSLWKEENEQVVQRCLQLNPSFKLLSCKKALRNKWHNVGDKDYPNIGKNVLYCQPDSDLTDGIFLALFEKRREGEKD.

Residues 235–241, Glu259, Asp286, and Asp304 each bind S-adenosyl-L-methionine; that span reads CAAPGMK. The Nucleophile role is filled by Cys357.

This sequence belongs to the class I-like SAM-binding methyltransferase superfamily. RsmB/NOP family.

The enzyme catalyses a cytidine in 28S rRNA + S-adenosyl-L-methionine = a 5-methylcytidine in 28S rRNA + S-adenosyl-L-homocysteine + H(+). S-adenosyl-L-methionine-dependent methyltransferase that specifically methylates the C(5) position of a cytosine in 28S rRNA. This Drosophila melanogaster (Fruit fly) protein is 28S rRNA (cytosine-C(5))-methyltransferase.